The sequence spans 264 residues: Cell cycle regulator CcrZ (264 aa).

Residues F32, W70, and G73 each coordinate ATP. A Brenner's motif [HXDhX3N] motif is present at residues 157–164 (HGDVRHSN). D159 serves as the catalytic Proton acceptor. The APH motif lies at 173–196 (IYLVDWDSVRLTDRMFDVAHMLCH).

Belongs to the aminoglycoside phosphotransferase family. Monomer in solution. Interacts with DnaA (via domains I (1-82) and III (111-326)). Interacts with DnaB. Interacts with FtsZ; the interaction is direct and ensures correct localization during the cell cycle.

The protein resides in the cytoplasm. It catalyses the reaction D-ribose + ATP = D-ribose 5-phosphate + ADP + H(+). The enzyme catalyses 2-deoxy-D-ribose + ATP = 2-deoxy-D-ribose 5-phosphate + ADP + H(+). Functionally, plays a role in cell cycle regulation and chromosome integrity. Activates DnaA-dependent chromosomal DNA replication initiation ensuring that the chromosome is replicated at the right time during the cell cycle. May regulate replication initiation through phosphorylation of a possible second messenger or metabolite, and by interacting with replication initiation proteins. Has ATPase activity with D-ribose and 2-deoxy-D-ribose in vitro, but not with choline. Involved in DNA damage response. The sequence is that of Cell cycle regulator CcrZ from Streptococcus pneumoniae serotype 2 (strain D39 / NCTC 7466).